Reading from the N-terminus, the 281-residue chain is Digeranylgeranylglyceryl phosphate synthase (281 aa).

The next 8 membrane-spanning stretches (helical) occupy residues 7–27, 32–52, 72–91, 95–117, 128–148, 193–213, 214–234, and 258–278; these read ILRPVNAVMAVITVMLMALIT, FSVLLASVVVFTATGAGNVIN, GRISRGVAGVYSIILFALAS, FYLGLLPGLVVVSSSLLMVYYAW, ITISFLTGLSFVFGGIVLGEV, ISGVLAASFMLIASLTSPSLY, LLGIFSALYIPVLLLAVAVFL, and VGMALTFIAFAAGSGTITALT.

The protein belongs to the UbiA prenyltransferase family. DGGGP synthase subfamily. Mg(2+) is required as a cofactor.

The protein localises to the cell membrane. It carries out the reaction sn-3-O-(geranylgeranyl)glycerol 1-phosphate + (2E,6E,10E)-geranylgeranyl diphosphate = 2,3-bis-O-(geranylgeranyl)-sn-glycerol 1-phosphate + diphosphate. The protein operates within membrane lipid metabolism; glycerophospholipid metabolism. In terms of biological role, prenyltransferase that catalyzes the transfer of the geranylgeranyl moiety of geranylgeranyl diphosphate (GGPP) to the C2 hydroxyl of (S)-3-O-geranylgeranylglyceryl phosphate (GGGP). This reaction is the second ether-bond-formation step in the biosynthesis of archaeal membrane lipids. This chain is Digeranylgeranylglyceryl phosphate synthase, found in Methanothermobacter thermautotrophicus (strain ATCC 29096 / DSM 1053 / JCM 10044 / NBRC 100330 / Delta H) (Methanobacterium thermoautotrophicum).